Reading from the N-terminus, the 98-residue chain is Hainantoxin-XVII.3 (98 aa).

The first 40 residues, 1-40, serve as a signal peptide directing secretion; that stretch reads MTTVGVSLFRRSPEKITMKIATFLGLSFLLIASYFLICEA. The propeptide occupies 41-64; sequence QHPGFQELLILEENMRDPENSKER. Disulfide bonds link Cys-66/Cys-81, Cys-73/Cys-85, and Cys-80/Cys-95.

This sequence belongs to the hainantoxin family. 17 subfamily. As to expression, expressed by the venom gland.

It is found in the secreted. Inhibits with low potency Kv1.2/KCNA2 and Kv1.3/KCNA3 voltage-gated potassium channels. This Cyriopagopus hainanus (Chinese bird spider) protein is Hainantoxin-XVII.3.